Here is a 208-residue protein sequence, read N- to C-terminus: Small ribosomal subunit protein uS4 (208 aa).

Residues 98–161 enclose the S4 RNA-binding domain; sequence RRLDNVVYRM…KSNPQVVRAM (64 aa).

Belongs to the universal ribosomal protein uS4 family. In terms of assembly, part of the 30S ribosomal subunit. Contacts protein S5. The interaction surface between S4 and S5 is involved in control of translational fidelity.

In terms of biological role, one of the primary rRNA binding proteins, it binds directly to 16S rRNA where it nucleates assembly of the body of the 30S subunit. Its function is as follows. With S5 and S12 plays an important role in translational accuracy. In Helicobacter acinonychis (strain Sheeba), this protein is Small ribosomal subunit protein uS4.